We begin with the raw amino-acid sequence, 363 residues long: Molybdenum import ATP-binding protein ModC (363 aa).

One can recognise an ABC transporter domain in the interval 1–232; sequence MLDLDLRRRQ…PGLRPLTGRY (232 aa). 30 to 37 provides a ligand contact to ATP; sequence GRSGSGKT. One can recognise a Mop domain in the interval 292–358; sequence RVSIRNVLPA…IKALTIARGD (67 aa).

It belongs to the ABC transporter superfamily. Molybdate importer (TC 3.A.1.8) family. The complex is composed of two ATP-binding proteins (ModC), two transmembrane proteins (ModB) and a solute-binding protein (ModA).

It is found in the cell inner membrane. It catalyses the reaction molybdate(out) + ATP + H2O = molybdate(in) + ADP + phosphate + H(+). In terms of biological role, part of the ABC transporter complex ModABC involved in molybdenum import. Responsible for energy coupling to the transport system. The protein is Molybdenum import ATP-binding protein ModC of Paramagnetospirillum magneticum (strain ATCC 700264 / AMB-1) (Magnetospirillum magneticum).